The primary structure comprises 976 residues: Receptor-like protein 14 (976 aa).

The signal sequence occupies residues 1–26 (MERKVFSGQNLIWVMLLLVQLRGYKC). The Extracellular portion of the chain corresponds to 27 to 928 (CIEKERKALL…DDDDEAAIDM (902 aa)). Residues asparagine 60, asparagine 75, asparagine 98, asparagine 112, asparagine 151, asparagine 185, and asparagine 200 are each glycosylated (N-linked (GlcNAc...) asparagine). LRR repeat units lie at residues 105-127 (FEEL…LFDD), 137-160 (LRNL…FLNA), 162-185 (TSLT…ELKN), 186-209 (LTKL…FTHL), 210-233 (EKLK…ELKV), 234-258 (LTNL…VFCE), 260-283 (KNLR…LGNL), 284-306 (NKLR…SFNS), 308-331 (ESLE…PLAN), 333-358 (TKLK…WLPK), 359-381 (FQLT…LVYQ), 382-405 (TNLR…LLEN), 407-428 (PELK…PTIV), 429-452 (HKLQ…IGHV), 454-477 (PRLL…MGEM), 478-501 (NDIS…LLTG), and 503-528 (FSLI…RLTS). N-linked (GlcNAc...) asparagine glycosylation is present at asparagine 331. Asparagine 416 carries N-linked (GlcNAc...) asparagine glycosylation. Residues asparagine 460 and asparagine 489 are each glycosylated (N-linked (GlcNAc...) asparagine). The LRR 18; degenerate repeat unit spans residues 530-549 (IVLRMHNNLFTGEIGVGLRT). LRR repeat units follow at residues 550–573 (LVNL…SIPP), 575–599 (SSHL…LLAI), 600–623 (HHLN…VVNS), 625–645 (YGIK…VTLL), 646–669 (ENAY…VNTG), 671–692 (MITL…LCDL), 693–715 (TSIR…CLNH), 782–805 (LDYM…ELGD), 806–829 (LSKL…NFSK), 831–854 (KDIE…LTNL), and 856–879 (SLAV…QFNT). The N-linked (GlcNAc...) asparagine glycan is linked to asparagine 552. Asparagine 633 is a glycosylation site (N-linked (GlcNAc...) asparagine). N-linked (GlcNAc...) asparagine glycosylation is present at asparagine 680. Asparagine 813, asparagine 826, asparagine 853, asparagine 861, and asparagine 866 each carry an N-linked (GlcNAc...) asparagine glycan. The tract at residues 897-922 (DRSCEGKKNTKEADNGGEEEEEDDDD) is disordered. Residues 898–910 (RSCEGKKNTKEAD) are compositionally biased toward basic and acidic residues. Residues 911-922 (NGGEEEEEDDDD) are compositionally biased toward acidic residues. Residues 929–949 (VVLYWTTGSTYAIALIGILVL) traverse the membrane as a helical segment. The Cytoplasmic portion of the chain corresponds to 950-976 (MCFDCPWRRTWLCIVDAFIASGKSMFS).

The protein belongs to the RLP family.

It localises to the cell membrane. This Arabidopsis thaliana (Mouse-ear cress) protein is Receptor-like protein 14.